Here is a 34-residue protein sequence, read N- to C-terminus: Leader peptide SpeFL (34 aa).

Residues 10–16 (HIRRTTH) carry the Ornithine recognition loop motif. Arginine 13 is a binding site for L-ornithine.

The protein belongs to the speF operon leader peptide family. As to quaternary structure, binds ornithine in stalled 70S ribosomes, blocking the upper two-thirds of the exit tunnel. Contacts 23S rRNA and ribosomal proteins L4 and L22.

Functionally, a small protein (arrest peptide) encoded upstream of inducible ornithine carboxylase gene (speF) that controls expression of downstream genes (speF and potE) by transcriptional and translational attenuation. Its expression controls transcription and translation of downstream SpeF; translation pausing at low Arg levels on this mRNA prevents premature Rho-dependent transcription termination of speF and also enhances SprF translation by preventing sequestration of its ribosome-binding site. In the presence of high Arg levels translation of this protein allows the formation of an speF mRNA structure that is degraded by RNase G. The sequence is that of Leader peptide SpeFL from Salmonella typhimurium (strain SL1344).